Reading from the N-terminus, the 104-residue chain is MNNTAFSKLAETTIVYIVDKIEEQDLEGIIDVDLQGDILNLDTENGIYVINTQSASKEIWLSSPVSGPHHFFYEQGKWKSRIGFELMVLLTEELGIRFDKYEIF.

It belongs to the frataxin family.

In terms of biological role, involved in iron-sulfur (Fe-S) cluster assembly. May act as a regulator of Fe-S biogenesis. The sequence is that of Iron-sulfur cluster assembly protein CyaY from Rickettsia prowazekii (strain Madrid E).